The sequence spans 341 residues: L-threonine 3-dehydrogenase (341 aa).

Cys-38 contributes to the Zn(2+) binding site. Active-site charge relay system residues include Thr-40 and His-43. The Zn(2+) site is built by His-63, Glu-64, Cys-93, Cys-96, Cys-99, and Cys-107. NAD(+) is bound by residues Ile-175, Asp-195, Arg-200, 262–264 (LGI), and 286–287 (IY).

This sequence belongs to the zinc-containing alcohol dehydrogenase family. Homotetramer. Zn(2+) serves as cofactor.

Its subcellular location is the cytoplasm. The enzyme catalyses L-threonine + NAD(+) = (2S)-2-amino-3-oxobutanoate + NADH + H(+). The protein operates within amino-acid degradation; L-threonine degradation via oxydo-reductase pathway; glycine from L-threonine: step 1/2. Its function is as follows. Catalyzes the NAD(+)-dependent oxidation of L-threonine to 2-amino-3-ketobutyrate. The protein is L-threonine 3-dehydrogenase of Enterobacter sp. (strain 638).